The chain runs to 497 residues: 3-octaprenyl-4-hydroxybenzoate carboxy-lyase (497 aa).

Asparagine 175 lines the Mn(2+) pocket. Prenylated FMN contacts are provided by residues 178-180 (IYR), 192-194 (RWL), and 197-198 (RG). Glutamate 241 contacts Mn(2+). The active-site Proton donor is the aspartate 290.

The protein belongs to the UbiD family. As to quaternary structure, homohexamer. The cofactor is prenylated FMN. Mn(2+) is required as a cofactor.

It is found in the cell membrane. It carries out the reaction a 4-hydroxy-3-(all-trans-polyprenyl)benzoate + H(+) = a 2-(all-trans-polyprenyl)phenol + CO2. Its pathway is cofactor biosynthesis; ubiquinone biosynthesis. Functionally, catalyzes the decarboxylation of 3-octaprenyl-4-hydroxy benzoate to 2-octaprenylphenol, an intermediate step in ubiquinone biosynthesis. This Shigella flexneri protein is 3-octaprenyl-4-hydroxybenzoate carboxy-lyase.